The sequence spans 614 residues: Pyrophosphate--fructose 6-phosphate 1-phosphotransferase subunit alpha 1 (614 aa).

It belongs to the phosphofructokinase type A (PFKA) family. PPi-dependent PFK group II subfamily. Clade 'Long' sub-subfamily. Tetramer of two alpha (regulatory) and two beta (catalytic) chains. In terms of tissue distribution, expressed in leaves, roots, and flowers (e.g. sepals, petals, stamen and gynoecium).

It localises to the cytoplasm. The protein operates within carbohydrate degradation; glycolysis; D-glyceraldehyde 3-phosphate and glycerone phosphate from D-glucose: step 3/4. Allosterically activated by fructose 2,6-bisphosphate. Its function is as follows. Regulatory subunit of pyrophosphate--fructose 6-phosphate 1-phosphotransferase. This chain is Pyrophosphate--fructose 6-phosphate 1-phosphotransferase subunit alpha 1, found in Arabidopsis thaliana (Mouse-ear cress).